A 121-amino-acid chain; its full sequence is Small ribosomal subunit protein uS13 (121 aa).

A disordered region spans residues Gly-94–Lys-121. Positions Val-109–Lys-121 are enriched in basic residues.

Belongs to the universal ribosomal protein uS13 family. In terms of assembly, part of the 30S ribosomal subunit. Forms a loose heterodimer with protein S19. Forms two bridges to the 50S subunit in the 70S ribosome.

Its function is as follows. Located at the top of the head of the 30S subunit, it contacts several helices of the 16S rRNA. In the 70S ribosome it contacts the 23S rRNA (bridge B1a) and protein L5 of the 50S subunit (bridge B1b), connecting the 2 subunits; these bridges are implicated in subunit movement. Contacts the tRNAs in the A and P-sites. The polypeptide is Small ribosomal subunit protein uS13 (Onion yellows phytoplasma (strain OY-M)).